We begin with the raw amino-acid sequence, 324 residues long: Probable UDP-sugar transporter protein SLC35A4 (324 aa).

The Cytoplasmic segment spans residues 1–18 (MSVEDGGMPGLSRPRQAR). The chain crosses the membrane as a helical span at residues 19-39 (WTLMLLLSTAMYGAHAPLLAL). The Lumenal segment spans residues 40-52 (CHVDGRVPFRPSS). Residues 53–73 (AVLLTELTKLLLCAFSLLVGW) form a helical membrane-spanning segment. Residues 74-85 (QAWPQGAPPWRQ) are Cytoplasmic-facing. A helical membrane pass occupies residues 86–106 (AAPFALSALLYGANNNLVIYL). The Lumenal portion of the chain corresponds to 107-142 (QRYMDPSTYQVLSNLKIGSTAVLYCLCLRHRLSVRQ). Residues 143 to 163 (GLALLLLMAAGACYAAGGLQV) form a helical membrane-spanning segment. Residues 164 to 180 (PGNTLPRPPPAAAASPM) lie on the Cytoplasmic side of the membrane. Residues 181-201 (PLHITPLGLLLLILYCLISGL) form a helical membrane-spanning segment. Over 202 to 214 (SSVYTELLMKRQQ) the chain is Lumenal. The helical transmembrane segment at 215–235 (LPLALQNLFLYTFGVLLNLGL) threads the bilayer. Topologically, residues 236-250 (HAGGGPGPGLLEGFS) are cytoplasmic. A helical transmembrane segment spans residues 251-271 (GWAALVVLSQALNGLLMSVVM). The Lumenal segment spans residues 272 to 275 (KHGS). A helical membrane pass occupies residues 276 to 298 (SITRLFVVSCSLVVNAVLSAVLL). At 299–324 (RLQLTAAFFLATLLIGLAMRLYYGSR) the chain is on the cytoplasmic side.

Belongs to the nucleotide-sugar transporter family. SLC35A subfamily. Found in a complex with SLC35A2 and SLC35A3.

The protein resides in the golgi apparatus membrane. It carries out the reaction CDP-L-ribitol(in) + CDP(out) = CDP-L-ribitol(out) + CDP(in). In terms of biological role, mediates the transport of CDP-ribitol. Does not exhibit CMP-sialic acid, UDP-galactose and UDP-N-acetylglucosamine transport activity. This chain is Probable UDP-sugar transporter protein SLC35A4, found in Pongo abelii (Sumatran orangutan).